A 309-amino-acid chain; its full sequence is NAD-dependent protein deacylase sirtuin-5B, mitochondrial (309 aa).

A mitochondrion-targeting transit peptide spans M1 to P35. The 271-residue stretch at S36–E306 folds into the Deacetylase sirtuin-type domain. G57–W76 contacts NAD(+). Y101 and R104 together coordinate substrate. Q139–D142 is an NAD(+) binding site. Catalysis depends on H157, which acts as the Proton acceptor. Residues C165, C168, C206, and C211 each coordinate Zn(2+). NAD(+)-binding positions include G248 to S250, N274 to E276, and C292.

This sequence belongs to the sirtuin family. Class III subfamily. The cofactor is Zn(2+).

The protein resides in the mitochondrion. Its subcellular location is the cytoplasm. It is found in the cytosol. The protein localises to the nucleus. It catalyses the reaction N(6)-malonyl-L-lysyl-[protein] + NAD(+) + H2O = 2''-O-malonyl-ADP-D-ribose + nicotinamide + L-lysyl-[protein]. The catalysed reaction is N(6)-succinyl-L-lysyl-[protein] + NAD(+) + H2O = 2''-O-succinyl-ADP-D-ribose + nicotinamide + L-lysyl-[protein]. The enzyme catalyses N(6)-glutaryl-L-lysyl-[protein] + NAD(+) + H2O = 2''-O-glutaryl-ADP-D-ribose + nicotinamide + L-lysyl-[protein]. Functionally, NAD-dependent lysine demalonylase, desuccinylase and deglutarylase that specifically removes malonyl, succinyl and glutaryl groups on target proteins. Has weak NAD-dependent protein deacetylase activity; however this activity may not be physiologically relevant in vivo. This Xenopus laevis (African clawed frog) protein is NAD-dependent protein deacylase sirtuin-5B, mitochondrial (sirt5-b).